Consider the following 477-residue polypeptide: Ribulose bisphosphate carboxylase large chain (477 aa).

The propeptide occupies 1-2 (MS). Pro3 bears the N-acetylproline mark. Lys14 is modified (N6,N6,N6-trimethyllysine). Residues Asn123 and Thr173 each coordinate substrate. Lys175 (proton acceptor) is an active-site residue. Lys177 serves as a coordination point for substrate. Residues Lys201, Asp203, and Glu204 each contribute to the Mg(2+) site. Lys201 carries the N6-carboxylysine modification. His294 serves as the catalytic Proton acceptor. Substrate-binding residues include Arg295, His327, and Ser379.

It belongs to the RuBisCO large chain family. Type I subfamily. As to quaternary structure, heterohexadecamer of 8 large chains and 8 small chains; disulfide-linked. The disulfide link is formed within the large subunit homodimers. Mg(2+) is required as a cofactor. In terms of processing, the disulfide bond which can form in the large chain dimeric partners within the hexadecamer appears to be associated with oxidative stress and protein turnover.

It is found in the plastid. Its subcellular location is the chloroplast. The catalysed reaction is 2 (2R)-3-phosphoglycerate + 2 H(+) = D-ribulose 1,5-bisphosphate + CO2 + H2O. The enzyme catalyses D-ribulose 1,5-bisphosphate + O2 = 2-phosphoglycolate + (2R)-3-phosphoglycerate + 2 H(+). RuBisCO catalyzes two reactions: the carboxylation of D-ribulose 1,5-bisphosphate, the primary event in carbon dioxide fixation, as well as the oxidative fragmentation of the pentose substrate in the photorespiration process. Both reactions occur simultaneously and in competition at the same active site. The chain is Ribulose bisphosphate carboxylase large chain from Hyophorbe lagenicaulis (Bottle palm).